Reading from the N-terminus, the 349-residue chain is tRNA pseudouridine synthase D (349 aa).

Residue phenylalanine 27 participates in substrate binding. Aspartate 80 serves as the catalytic Nucleophile. Substrate is bound at residue asparagine 129. A TRUD domain is found at 155-303 (GVPNYFGAQR…VEASRRAMLL (149 aa)). Position 329 (phenylalanine 329) interacts with substrate.

The protein belongs to the pseudouridine synthase TruD family.

The catalysed reaction is uridine(13) in tRNA = pseudouridine(13) in tRNA. Its function is as follows. Responsible for synthesis of pseudouridine from uracil-13 in transfer RNAs. This Salmonella dublin (strain CT_02021853) protein is tRNA pseudouridine synthase D.